A 96-amino-acid chain; its full sequence is UPF0358 protein Aflv_1873 (96 aa).

The protein belongs to the UPF0358 family.

This Anoxybacillus flavithermus (strain DSM 21510 / WK1) protein is UPF0358 protein Aflv_1873.